The primary structure comprises 330 residues: Stimulated by retinoic acid gene 8 protein homolog (330 aa).

Positions 50–55 match the Nuclear localization signal (NLS) motif; it reads RVARRR. The stretch at 88 to 112 forms a coiled coil; that stretch reads QVLNKAKSHIPELEQTLDNLLKLKA.

In terms of assembly, interacts with XPO1. Interacts with MEIOSIN. Phosphorylated. As to expression, expressed specifically in testis and fetal ovaries.

It is found in the cytoplasm. The protein localises to the nucleus. Functionally, meiosis-inducer required for the transition into meiosis for both female and male germ cells. In female germ cells, acts downstream of ZGLP1 as a key effector of the meiotic program: required for premeiotic DNA replication and subsequent events in meiotic prophase. During spermatogenesis, next to its role in meiotic initiation, promotes (but is not required for) spermatogonial differentiation. In complex with MEIOSIN, directly activates the transcription of a subset of critical meiotic genes playing a central role in cell-cycle switching from mitosis to meiosis. In Homo sapiens (Human), this protein is Stimulated by retinoic acid gene 8 protein homolog.